A 206-amino-acid polypeptide reads, in one-letter code: Large ribosomal subunit protein uL4 (206 aa).

The segment at 63 to 94 (MYKQKGTGRARHHSARAPQFRGGGKAHGPVVR) is disordered. Residues 64–77 (YKQKGTGRARHHSA) are compositionally biased toward basic residues.

This sequence belongs to the universal ribosomal protein uL4 family. As to quaternary structure, part of the 50S ribosomal subunit.

In terms of biological role, one of the primary rRNA binding proteins, this protein initially binds near the 5'-end of the 23S rRNA. It is important during the early stages of 50S assembly. It makes multiple contacts with different domains of the 23S rRNA in the assembled 50S subunit and ribosome. Functionally, forms part of the polypeptide exit tunnel. This chain is Large ribosomal subunit protein uL4, found in Mesorhizobium japonicum (strain LMG 29417 / CECT 9101 / MAFF 303099) (Mesorhizobium loti (strain MAFF 303099)).